Reading from the N-terminus, the 334-residue chain is 3-keto-steroid reductase/17-beta-hydroxysteroid dehydrogenase 7 (334 aa).

Residues Met-1 to Asn-229 are Extracellular-facing. Thr-8–Gly-15 contacts NAD(+). N-linked (GlcNAc...) asparagine glycosylation occurs at Asn-37. Residue Ser-171 coordinates substrate. Asn-178 carries an N-linked (GlcNAc...) asparagine glycan. Tyr-193 (proton acceptor) is an active-site residue. N-linked (GlcNAc...) asparagine glycosylation occurs at Asn-229. The helical transmembrane segment at Leu-230 to Leu-250 threads the bilayer. Residues Arg-251 to Ser-334 are Cytoplasmic-facing.

The protein belongs to the short-chain dehydrogenases/reductases (SDR) family. ERG27 subfamily. As to quaternary structure, binds to the short form of prolactin receptor. In terms of processing, phosphorylated. As to expression, most abundant in ovaries of pregnant animals.

The protein localises to the endoplasmic reticulum membrane. It catalyses the reaction 17beta-estradiol + NADP(+) = estrone + NADPH + H(+). The enzyme catalyses a 3beta-hydroxysteroid + NADP(+) = a 3-oxosteroid + NADPH + H(+). It carries out the reaction 4alpha-methyl-5alpha-cholest-7-en-3beta-ol + NADP(+) = 4alpha-methyl-5alpha-cholest-7-en-3-one + NADPH + H(+). The catalysed reaction is 4alpha-methyl-5alpha-cholest-8-en-3-one + NADPH + H(+) = 4alpha-methyl-5alpha-cholest-8-en-3beta-ol + NADP(+). It catalyses the reaction 3-dehydro-4alpha-methylzymosterol + NADPH + H(+) = 4alpha-methylzymosterol + NADP(+). The enzyme catalyses zymosterone + NADPH + H(+) = zymosterol + NADP(+). It carries out the reaction 5alpha-cholest-8-en-3-one + NADPH + H(+) = 5alpha-cholest-8-en-3beta-ol + NADP(+). The catalysed reaction is 5alpha-androstane-3beta,17beta-diol + NADP(+) = 17beta-hydroxy-5alpha-androstan-3-one + NADPH + H(+). It catalyses the reaction 5alpha-androstane-3alpha,17beta-diol + NADP(+) = 17beta-hydroxy-5alpha-androstan-3-one + NADPH + H(+). It functions in the pathway steroid biosynthesis; estrogen biosynthesis. It participates in steroid biosynthesis; zymosterol biosynthesis; zymosterol from lanosterol: step 5/6. Its function is as follows. Bifunctional enzyme involved in steroid-hormone metabolism and cholesterol biosynthesis. Catalyzes the NADP(H)-dependent reduction of estrogens and androgens and regulates the biological potency of these steroids. Converts estrone (E1) to a more potent estrogen, 17beta-estradiol (E2). Converts dihydrotestosterone (DHT) to an inactive form. Also participates in the post-squalene cholesterol biosynthesis, as a 3-ketosteroid reductase. This is 3-keto-steroid reductase/17-beta-hydroxysteroid dehydrogenase 7 (Hsd17b7) from Rattus norvegicus (Rat).